A 60-amino-acid polypeptide reads, in one-letter code: Large ribosomal subunit protein uL30 (60 aa).

Belongs to the universal ribosomal protein uL30 family. Part of the 50S ribosomal subunit.

The polypeptide is Large ribosomal subunit protein uL30 (Salinispora tropica (strain ATCC BAA-916 / DSM 44818 / JCM 13857 / NBRC 105044 / CNB-440)).